The sequence spans 312 residues: D-alanine--D-alanine ligase (312 aa).

The 206-residue stretch at 99–304 (KKILKAEGIP…FEDLVEKILM (206 aa)) folds into the ATP-grasp domain. 131–186 (LQTLKLPVVIKAPREGSTIGIEFVFSKQELPKAIKKVLEIDKQLLVEEFIEGVEVT) contributes to the ATP binding site. Mg(2+) contacts are provided by Asp257, Glu271, and Asn273.

It belongs to the D-alanine--D-alanine ligase family. Requires Mg(2+) as cofactor. The cofactor is Mn(2+).

It is found in the cytoplasm. The enzyme catalyses 2 D-alanine + ATP = D-alanyl-D-alanine + ADP + phosphate + H(+). The protein operates within cell wall biogenesis; peptidoglycan biosynthesis. Functionally, cell wall formation. The polypeptide is D-alanine--D-alanine ligase (Carboxydothermus hydrogenoformans (strain ATCC BAA-161 / DSM 6008 / Z-2901)).